Reading from the N-terminus, the 130-residue chain is NADH-quinone oxidoreductase subunit A (130 aa).

Transmembrane regions (helical) follow at residues 17–37, 74–94, and 99–119; these read YIFV…MLAL, LVGI…PWAV, and LGPA…VGFV.

Belongs to the complex I subunit 3 family. As to quaternary structure, NDH-1 is composed of 14 different subunits. Subunits NuoA, H, J, K, L, M, N constitute the membrane sector of the complex.

It localises to the cell inner membrane. It carries out the reaction a quinone + NADH + 5 H(+)(in) = a quinol + NAD(+) + 4 H(+)(out). In terms of biological role, NDH-1 shuttles electrons from NADH, via FMN and iron-sulfur (Fe-S) centers, to quinones in the respiratory chain. The immediate electron acceptor for the enzyme in this species is believed to be ubiquinone. Couples the redox reaction to proton translocation (for every two electrons transferred, four hydrogen ions are translocated across the cytoplasmic membrane), and thus conserves the redox energy in a proton gradient. This Neorickettsia sennetsu (strain ATCC VR-367 / Miyayama) (Ehrlichia sennetsu) protein is NADH-quinone oxidoreductase subunit A.